Consider the following 246-residue polypeptide: 2',3'-cyclic-nucleotide 3'-phosphodiesterase (246 aa).

His-40 (proton donor/acceptor) is an active-site residue. A substrate-binding site is contributed by Thr-42. Polar residues predominate over residues 133–146; the sequence is QNPQLYTKDNNGNT. A disordered region spans residues 133-159; the sequence is QNPQLYTKDNNGNTIRRKPSKKKSKTT. The span at 147 to 156 shows a compositional bias: basic residues; it reads IRRKPSKKKS. Residue His-188 is the Proton donor/acceptor of the active site. Ser-190 and Tyr-193 together coordinate substrate.

This sequence belongs to the 2H phosphoesterase superfamily. CPD1 family.

It is found in the golgi apparatus. It catalyses the reaction a nucleoside 2',3'-cyclic phosphate + H2O = a nucleoside 2'-phosphate + H(+). Its function is as follows. Involved in the metabolism of ADP-ribose 1',2'-cyclic phosphate which is produced as a consequence of tRNA splicing. This Candida albicans (strain SC5314 / ATCC MYA-2876) (Yeast) protein is 2',3'-cyclic-nucleotide 3'-phosphodiesterase (CPD1).